The primary structure comprises 239 residues: Purine nucleoside phosphorylase DeoD-type (239 aa).

His-5 contacts a purine D-ribonucleoside. Residues Gly-21, Arg-25, Arg-44, and 88 to 91 contribute to the phosphate site; that span reads RVGS. Residues 180-182 and 204-205 each bind a purine D-ribonucleoside; these read EME and SD. Asp-205 functions as the Proton donor in the catalytic mechanism.

Belongs to the PNP/UDP phosphorylase family. Homohexamer; trimer of homodimers.

The catalysed reaction is a purine D-ribonucleoside + phosphate = a purine nucleobase + alpha-D-ribose 1-phosphate. The enzyme catalyses a purine 2'-deoxy-D-ribonucleoside + phosphate = a purine nucleobase + 2-deoxy-alpha-D-ribose 1-phosphate. In terms of biological role, catalyzes the reversible phosphorolytic breakdown of the N-glycosidic bond in the beta-(deoxy)ribonucleoside molecules, with the formation of the corresponding free purine bases and pentose-1-phosphate. The polypeptide is Purine nucleoside phosphorylase DeoD-type (Myxococcus xanthus (strain DK1622)).